The primary structure comprises 179 residues: MAQFSESADVPDMGRRQFMNLLTFGTVTGVALGALYPVVKYFIPPASGGAGGGTTAKDELGNDVSLSKFLENRNAGDRALVQGLKGDPTYIVVENKQAIKDYGINAICTHLGCVVPWNVAENKFKCPCHGSQYDETGKVVRGPAPLSLALAHANTVDDKIILSPWTETDFRTGDAPWWA.

Residues 21–43 (LLTFGTVTGVALGALYPVVKYFI) form a helical membrane-spanning segment. A Rieske domain is found at 61–162 (GNDVSLSKFL…ANTVDDKIIL (102 aa)). The [2Fe-2S] cluster site is built by Cys-108, His-110, Cys-126, and His-129. A disulfide bond links Cys-113 and Cys-128.

It belongs to the Rieske iron-sulfur protein family. As to quaternary structure, the 4 large subunits of the cytochrome b6-f complex are cytochrome b6, subunit IV (17 kDa polypeptide, PetD), cytochrome f and the Rieske protein, while the 4 small subunits are PetG, PetL, PetM and PetN. The complex functions as a dimer. It depends on [2Fe-2S] cluster as a cofactor.

It is found in the cellular thylakoid membrane. It catalyses the reaction 2 oxidized [plastocyanin] + a plastoquinol + 2 H(+)(in) = 2 reduced [plastocyanin] + a plastoquinone + 4 H(+)(out). Component of the cytochrome b6-f complex, which mediates electron transfer between photosystem II (PSII) and photosystem I (PSI), cyclic electron flow around PSI, and state transitions. This Desmonostoc sp. (strain PCC 7906) (Nostoc sp. (strain PCC 7906)) protein is Cytochrome b6-f complex iron-sulfur subunit.